The primary structure comprises 601 residues: MVKQENIRNFCIIAHIDHGKSTLADRILELTQVVSQREARQQYLDRMDLERERGITIKAQTVRIPYIAADGQEYELNLIDTPGHVDFNYEVSRSLAACEGALLVVDATQGVEAQTLANVYLALDHDHEVIPVLNKIDLPSAEVDRVKAEIEESIGLDCSQALPVSAKTGMGVDAVLEAIVHHLPAPKGDRAAPLKALIFDSWYDSYQGVVVLFRIMDGSVRKGDTVRLMSTGKEYEVLRLGVFSPEPTDVKELFAGEVGFLCGSIKELGDARVGDTITHADRPAETAVPGFKEVKAMVFCGLYPTESEDYENLKAALEKLQLNDAAFSYEPETSQALGFGFRCGFLGLLHMEIIQERLEREFEVGLIATAPSVVYKVVTMDGKTLEIDNPSHLPDPTKIDTLYEPYVSMDIHVPNEYVGNVMKLCEEKRGTQKNLHYLAANRVVVTYELPFAEIVYDFFDRLKSATRGYASMDYHPLDYRASDLVRLDIMLNSEPVDALAVIVHRDRAYTYGRGLALKLKRTIPRQLFQVAIQAAIGQKIIARETVSAFRKDVTAKCYGGDISRKRKLLEKQKEGKRRMKRMGNVELPQEAFLAALKVGDE.

One can recognise a tr-type G domain in the interval E5–K187. GTP is bound by residues D17–T22 and N134–D137.

Belongs to the TRAFAC class translation factor GTPase superfamily. Classic translation factor GTPase family. LepA subfamily.

Its subcellular location is the cell inner membrane. The enzyme catalyses GTP + H2O = GDP + phosphate + H(+). Required for accurate and efficient protein synthesis under certain stress conditions. May act as a fidelity factor of the translation reaction, by catalyzing a one-codon backward translocation of tRNAs on improperly translocated ribosomes. Back-translocation proceeds from a post-translocation (POST) complex to a pre-translocation (PRE) complex, thus giving elongation factor G a second chance to translocate the tRNAs correctly. Binds to ribosomes in a GTP-dependent manner. This chain is Elongation factor 4, found in Desulfovibrio desulfuricans (strain ATCC 27774 / DSM 6949 / MB).